A 305-amino-acid chain; its full sequence is Acetyl-coenzyme A carboxylase carboxyl transferase subunit beta (305 aa).

In terms of domain architecture, CoA carboxyltransferase N-terminal spans 27–296 (LWVKCSACRE…PAAKADLAAR (270 aa)). Zn(2+)-binding residues include Cys-31, Cys-34, Cys-50, and Cys-53. A C4-type zinc finger spans residues 31–53 (CSACRELIYKKQLNDNLKVCPKC).

This sequence belongs to the AccD/PCCB family. Acetyl-CoA carboxylase is a heterohexamer composed of biotin carboxyl carrier protein (AccB), biotin carboxylase (AccC) and two subunits each of ACCase subunit alpha (AccA) and ACCase subunit beta (AccD). Zn(2+) serves as cofactor.

The protein localises to the cytoplasm. It carries out the reaction N(6)-carboxybiotinyl-L-lysyl-[protein] + acetyl-CoA = N(6)-biotinyl-L-lysyl-[protein] + malonyl-CoA. It participates in lipid metabolism; malonyl-CoA biosynthesis; malonyl-CoA from acetyl-CoA: step 1/1. Its function is as follows. Component of the acetyl coenzyme A carboxylase (ACC) complex. Biotin carboxylase (BC) catalyzes the carboxylation of biotin on its carrier protein (BCCP) and then the CO(2) group is transferred by the transcarboxylase to acetyl-CoA to form malonyl-CoA. This chain is Acetyl-coenzyme A carboxylase carboxyl transferase subunit beta, found in Chloroflexus aggregans (strain MD-66 / DSM 9485).